We begin with the raw amino-acid sequence, 270 residues long: Carboxy-S-adenosyl-L-methionine synthase (270 aa).

S-adenosyl-L-methionine is bound by residues Y65, 90 to 92, 143 to 144, N158, and R225; these read GCS and DI.

Belongs to the class I-like SAM-binding methyltransferase superfamily. Cx-SAM synthase family. In terms of assembly, homodimer.

The enzyme catalyses prephenate + S-adenosyl-L-methionine = carboxy-S-adenosyl-L-methionine + 3-phenylpyruvate + H2O. Functionally, catalyzes the conversion of S-adenosyl-L-methionine (SAM) to carboxy-S-adenosyl-L-methionine (Cx-SAM). The polypeptide is Carboxy-S-adenosyl-L-methionine synthase (Chromohalobacter salexigens (strain ATCC BAA-138 / DSM 3043 / CIP 106854 / NCIMB 13768 / 1H11)).